The following is a 414-amino-acid chain: MPTWTEYIFQKKLGHTPSPGDVVEVVPDLVGFHDLTGYHVLEVLESMGKVEVFDKERVVVAFDHLSPPPTQRAAEIMVYIRKHVKALELPHFYDVGGGILHQIILEKYAMPEYVIFAADSHTNTAGAVGAFAHGMGATDIAAALKLGKTWVVIPAPFRVDMKGEFPPGVMGKDVALHLLKQFGAEGFNGYSVEVFVEIPKAFPMDDRATVANMSTEMGADALMFIPDVVTVDYLQRERGVSYKPPDLQPGRYVDKYVVELSKLEPLVAAPYSVDNVKAVREVEGVEVDQVFIGSCTNGRLSDFEIAARILRRGRVKSRCIAIPASYTIFRKALELGYIDILTKAGCVVTYGTCGPCLGGHFGVAGPGEVVVSTSNRNFKGRMGHPDSKVYLANPATAAAAALEGKIVDPRPYLL.

[4Fe-4S] cluster contacts are provided by Cys295, Cys353, and Cys356.

It belongs to the aconitase/IPM isomerase family. LeuC type 2 subfamily. In terms of assembly, heterodimer of LeuC and LeuD. It depends on [4Fe-4S] cluster as a cofactor.

It carries out the reaction (2R,3S)-3-isopropylmalate = (2S)-2-isopropylmalate. Its pathway is amino-acid biosynthesis; L-leucine biosynthesis; L-leucine from 3-methyl-2-oxobutanoate: step 2/4. Catalyzes the isomerization between 2-isopropylmalate and 3-isopropylmalate, via the formation of 2-isopropylmaleate. This Pyrobaculum islandicum (strain DSM 4184 / JCM 9189 / GEO3) protein is 3-isopropylmalate dehydratase large subunit.